A 118-amino-acid polypeptide reads, in one-letter code: Small ribosomal subunit protein uS17 (118 aa).

Belongs to the universal ribosomal protein uS17 family. In terms of assembly, part of the 30S ribosomal subunit.

Functionally, one of the primary rRNA binding proteins, it binds specifically to the 5'-end of 16S ribosomal RNA. In Methanopyrus kandleri (strain AV19 / DSM 6324 / JCM 9639 / NBRC 100938), this protein is Small ribosomal subunit protein uS17.